The following is a 548-amino-acid chain: Myrosinase (548 aa).

The first 20 residues, 1–20 (MKLLHGLALVFLLAAASCKA), serve as a signal peptide directing secretion. 3 disulfides stabilise this stretch: C26-C458, C34-C454, and C226-C236. Residue Q59 coordinates substrate. Zn(2+)-binding residues include H76 and D90. N-linked (GlcNAc...) asparagine glycosylation occurs at N110. The substrate site is built by H161 and N206. Q207 is an L-ascorbate binding site. N-linked (GlcNAc...) asparagine glycosylation is present at N240. R281 is an L-ascorbate binding site. N-linked (GlcNAc...) asparagine glycosylation is present at N331. Position 352 (Y352) interacts with substrate. The Nucleophile role is filled by E429. Substrate is bound by residues W477 and 484-485 (EF). N520 carries an N-linked (GlcNAc...) asparagine glycan.

The protein belongs to the glycosyl hydrolase 1 family. Homodimer. In vacuoles called myrosin grains of a certain class of cells, myrosin cells, distributed in the cotyledons and the axis of the embryo as well as in different organs of the growing plant.

It is found in the vacuole. The enzyme catalyses a thioglucoside + H2O = a sugar + a thiol.. In terms of biological role, degradation of glucosinolates (glucose residue linked by a thioglucoside bound to an amino acid derivative) to glucose, sulfate and any of the products: thiocyanates, isothiocyanates, nitriles, epithionitriles or oxazolidine-2-thiones. The protein is Myrosinase of Brassica napus (Rape).